Reading from the N-terminus, the 388-residue chain is Protein phosphatase 2C 57 (388 aa).

A PPM-type phosphatase domain is found at 59 to 348 (RWGYTSVQGF…DNISIIIADL (290 aa)). Mn(2+) contacts are provided by Asp93, Gly94, Asp296, and Asp339. Residues 363-383 (VVVELVQAATTIGLVTVGIWM) form a helical membrane-spanning segment.

This sequence belongs to the PP2C family. Mg(2+) is required as a cofactor. Requires Mn(2+) as cofactor.

The protein localises to the membrane. It localises to the plastid. Its subcellular location is the chloroplast stroma. It carries out the reaction O-phospho-L-seryl-[protein] + H2O = L-seryl-[protein] + phosphate. The enzyme catalyses O-phospho-L-threonyl-[protein] + H2O = L-threonyl-[protein] + phosphate. Functionally, protein phosphatase specifically required for efficient dephosphorylation of the light-harvesting complex II outer antennae (LCHII) and transition from state 2 to state 1. State transition plays a central role in response to environmental changes and allows to adjust to changing light conditions via the redistribution of light excitation energy between photosystem II (PSII) and photosystem I (PSI) in a short time by relocating LHCII proteins. Mainly responsible for the dephosphorylation of Lhcb1 and Lhcb2 but not of the photosystem II core proteins. The protein is Protein phosphatase 2C 57 of Arabidopsis thaliana (Mouse-ear cress).